The primary structure comprises 405 residues: Argininosuccinate synthase (405 aa).

ATP-binding positions include 11–19 (AYSGGLDTS) and A38. Residues Y91 and S96 each contribute to the L-citrulline site. G121 contributes to the ATP binding site. L-aspartate is bound by residues T123, N127, and D128. Position 127 (N127) interacts with L-citrulline. The L-citrulline site is built by R131, S181, S190, E266, and Y278.

The protein belongs to the argininosuccinate synthase family. Type 1 subfamily. As to quaternary structure, homotetramer.

It is found in the cytoplasm. It catalyses the reaction L-citrulline + L-aspartate + ATP = 2-(N(omega)-L-arginino)succinate + AMP + diphosphate + H(+). Its pathway is amino-acid biosynthesis; L-arginine biosynthesis; L-arginine from L-ornithine and carbamoyl phosphate: step 2/3. In Nitratiruptor sp. (strain SB155-2), this protein is Argininosuccinate synthase.